Reading from the N-terminus, the 531-residue chain is 2,3-bisphosphoglycerate-independent phosphoglycerate mutase (531 aa).

Asp13 and Ser63 together coordinate Mn(2+). Ser63 (phosphoserine intermediate) is an active-site residue. Substrate-binding positions include His124, 154–155 (RD), Arg187, Arg193, 261–264 (RPDR), and Lys342. Mn(2+) is bound by residues Asp420, His424, Asp462, His463, and His480.

It belongs to the BPG-independent phosphoglycerate mutase family. In terms of assembly, monomer. Requires Mn(2+) as cofactor.

It catalyses the reaction (2R)-2-phosphoglycerate = (2R)-3-phosphoglycerate. It participates in carbohydrate degradation; glycolysis; pyruvate from D-glyceraldehyde 3-phosphate: step 3/5. In terms of biological role, catalyzes the interconversion of 2-phosphoglycerate and 3-phosphoglycerate. The protein is 2,3-bisphosphoglycerate-independent phosphoglycerate mutase of Mycoplasma mycoides subsp. mycoides SC (strain CCUG 32753 / NCTC 10114 / PG1).